We begin with the raw amino-acid sequence, 263 residues long: MWELRSASFWRAIFAEFFATLFYVFFGLGASLRWAPGPLHVLQVALAFGLALATLVQAVGHISGAHVNPAVTFAFLVGSQMSLLRAICYMAAQLLGAVAGAAVLYSVTPAAVRGNLALNTLHPGVSLGQATTVEIFLTLQFVLCIFATYDERRNGRLGSVALAVGFSLTLGHLFGMYYTGAGMNPARSFAPAILTRNFTNHWVYWVGPIIGGGLASLLYDFLLFPRLKSVSERLSILKGARPSDSNGQPEGTGEPVELKTQAL.

The Cytoplasmic portion of the chain corresponds to 1–9; sequence MWELRSASF. Residues 10–29 form a helical membrane-spanning segment; it reads WRAIFAEFFATLFYVFFGLG. Residues 30-41 lie on the Extracellular side of the membrane; that stretch reads ASLRWAPGPLHV. Residues 42-59 form a helical membrane-spanning segment; that stretch reads LQVALAFGLALATLVQAV. Residues 60-61 lie on the Cytoplasmic side of the membrane; that stretch reads GH. The segment at residues 62–77 is an intramembrane region (discontinuously helical); sequence ISGAHVNPAVTFAFLV. Positions 68–70 match the NPA 1 motif; the sequence is NPA. Topologically, residues 78 to 82 are cytoplasmic; sequence GSQMS. Residues 83–106 traverse the membrane as a helical segment; that stretch reads LLRAICYMAAQLLGAVAGAAVLYS. Topologically, residues 107-127 are extracellular; it reads VTPAAVRGNLALNTLHPGVSL. A helical transmembrane segment spans residues 128 to 148; sequence GQATTVEIFLTLQFVLCIFAT. At 149 to 156 the chain is on the cytoplasmic side; sequence YDERRNGR. Residues 157–175 form a helical membrane-spanning segment; the sequence is LGSVALAVGFSLTLGHLFG. The Extracellular portion of the chain corresponds to 176-178; sequence MYY. The segment at residues 179 to 193 is an intramembrane region (discontinuously helical); that stretch reads TGAGMNPARSFAPAI. The NPA 2 signature appears at 184–186; it reads NPA. The Extracellular segment spans residues 194–200; it reads LTRNFTN. A helical transmembrane segment spans residues 201–222; it reads HWVYWVGPIIGGGLASLLYDFL. The Cytoplasmic portion of the chain corresponds to 223-263; it reads LFPRLKSVSERLSILKGARPSDSNGQPEGTGEPVELKTQAL. An interaction with CALM region spans residues 227–237; that stretch reads LKSVSERLSIL. 3 positions are modified to phosphoserine: serine 235, serine 243, and serine 245. The segment at 240–263 is disordered; it reads ARPSDSNGQPEGTGEPVELKTQAL. Deamidated asparagine is present on asparagine 246.

It belongs to the MIP/aquaporin (TC 1.A.8) family. As to quaternary structure, homotetramer; each monomer provides an independent water pore. Two homotetramers on opposing membranes can dimerize, forming a cell-cell junction. Interacts with CALM; the calcium-calmodulin/CALM complex interacts with the cytoplasmic domains of two aquaporins, leading to channel closure. Interacts with BFSP1 (via C-terminus); prevents calcium-dependent inhibition of the water channel activity. Subject to partial proteolytic cleavage in the eye lens core. Partial proteolysis promotes interactions between tetramers from adjoining membranes. In terms of processing, fatty acylated at Met-1 and Lys-238. The acyl modifications, in decreasing order of ion abundance, are: oleoyl (C18:1) &gt; palmitoyl (C16:0) &gt; stearoyl (C18:0) &gt; eicosenoyl (C20:1) &gt; dihomo-gamma-linolenoyl (C20:3) &gt; palmitoleoyl (C16:1) &gt; eicosadienoyl (C20:2).

Its subcellular location is the cell membrane. The protein resides in the cell junction. The enzyme catalyses H2O(in) = H2O(out). With respect to regulation, the water channel activity is inhibited by calcium through calmodulin/CALM. In terms of biological role, aquaporins form homotetrameric transmembrane channels, with each monomer independently mediating water transport across the plasma membrane along its osmotic gradient. Specifically expressed in lens fiber cells, this aquaporin is crucial for maintaining lens water homeostasis and transparency. Beyond water permeability, it also acts as a cell-to-cell adhesion molecule, forming thin junctions between lens fiber cells that are essential for maintaining the ordered structure and transparency of the lens. The sequence is that of Lens fiber major intrinsic protein from Oryctolagus cuniculus (Rabbit).